We begin with the raw amino-acid sequence, 517 residues long: Cytochrome P450 monooxygenase calE (517 aa).

Asn-8 carries N-linked (GlcNAc...) asparagine glycosylation. Residues 14–34 (SLMHHYILIAILVASIIAMVV) form a helical membrane-spanning segment. Cys-458 is a binding site for heme.

This sequence belongs to the cytochrome P450 family. Heme serves as cofactor.

Its subcellular location is the membrane. The protein operates within secondary metabolite biosynthesis. Its function is as follows. Cytochrome P450 monooxygenase; part of the gene cluster that mediates the biosynthesis of calbistrin A and related compounds. Calbistrin A is a secondary metabolite with an interesting structure that was recently found to have bioactivity against leukemia cells. It consists of two polyketides linked by an ester bond: a bicyclic decalin containing polyketide and a linear 12 carbon dioic acid structure. The polyketide synthase calA is probably responsible for forming the decalin moiety. Because calA lacks a designated enoylreductase (ER) domain, the required activity is provided by the trans-enoyl reductase calK. Following release from the PKS, calF then probably catalyzes the oxidation and the subsequent Diels Alder cycloisomerization that lead to the formation of the decalin moiety. The decalin polyketide backbone includes two C-methyl groups, at C7 and C11 in backbone, of which the C7 position is probably methylated by the methyltransferase domain of calA. A candidate for adding the methyl group at C11, if not done by CalA, is the cluster methyltransferase calH. Several additional tailoring enzymes within the cluster could be involved in the modification of the decalin polyketide product. Those include the 3 cytochrome P450 monooxygenases CalE, CalG and CalL, of which one might be responsible for the introduction of the extra hydroxyl group attached to the backbone of the decalin moiety, at position C9 in the backbone, that allows for attachment of the linear moiety. One tailoring enzyme activity that is expected to be involved in biosynthesis of calbistrin is an acyltransferase for connecting the two polyketide synthase products, and which could be performed by the cluster acyltransferase calJ. The enzyme responsible for the biosynthesis of the linear moiety, probably a second PKS, has not been identified yet. This chain is Cytochrome P450 monooxygenase calE, found in Penicillium decumbens.